Consider the following 484-residue polypeptide: Transcription factor cghD (484 aa).

Residues 21–54 constitute a DNA-binding region (zn(2)-C6 fungal-type); the sequence is CDRCRLQKLKCTVQSMESDGRMVCERCVRAKVPC. 4 disordered regions span residues 59 to 117, 136 to 174, 202 to 242, and 386 to 406; these read RRRA…PTLA, TTAPTYSYHHHHHDSYQLGEGPPTPFPNPATTGGGSGSS, PAST…FSTT, and HMHSTPAPTTSPTLQLGELPS. A compositionally biased stretch (basic and acidic residues) spans 64 to 76; that stretch reads RPSDTKKQGDSST. Low complexity predominate over residues 77-107; sequence RRSTAPRTTNPEPTVLTPPLSTTSSTSEQTL. Residues 202–213 are compositionally biased toward low complexity; it reads PASTSTSTGSPT.

The protein resides in the nucleus. Its function is as follows. Transcription factor that regulates the expression of the gene cluster that mediates the biosynthesis of the tetramic acid Sch210972, a potential anti-HIV fungal natural product that contains a decalin core. The chain is Transcription factor cghD from Chaetomium globosum (strain ATCC 6205 / CBS 148.51 / DSM 1962 / NBRC 6347 / NRRL 1970) (Soil fungus).